We begin with the raw amino-acid sequence, 181 residues long: Large ribosomal subunit protein uL22 (181 aa).

A disordered region spans residues 157-181 (PEAAKKPGKKTSAVEKSKKATAATH).

It belongs to the universal ribosomal protein uL22 family.

This is Large ribosomal subunit protein uL22 (RpL17) from Biphyllus lunatus (Beetle).